A 1005-amino-acid polypeptide reads, in one-letter code: DNA polymerase (1005 aa).

It belongs to the DNA polymerase type-B family. As to quaternary structure, interacts with OPG148. Component of the Uracil-DNA glycosylase(UDG)-OPG148-polymerase complex; OPG148 and OPG116/UDG form a heterodimeric processivity factor that associates with OPG071 to form the processive polymerase holoenzyme.

The enzyme catalyses DNA(n) + a 2'-deoxyribonucleoside 5'-triphosphate = DNA(n+1) + diphosphate. Catalyzes DNA synthesis. Acquires processivity by associating with a heterodimeric processivity factor comprised of the viral OPG148 and OPG116 proteins, thereby forming the DNA polymerase holoenzyme. Displays 3'- to 5' exonuclease activity. Might participate in viral DNA recombination. Does not perform OPG116/D4synthesis across an abasic site. In Variola virus (isolate Human/India/Ind3/1967) (VARV), this protein is DNA polymerase (OPG071).